Reading from the N-terminus, the 683-residue chain is Protein kinase C eta type (683 aa).

One can recognise a C2 domain in the interval 1 to 118 (MSSGTMKFNG…LRTTGASDTF (118 aa)). Ser28 and Ser32 each carry phosphoserine; by autocatalysis. Phorbol-ester/DAG-type zinc fingers lie at residues 171–222 (GHKF…VTAC) and 245–295 (PHKF…APNC). At Ser317 the chain carries Phosphoserine. Residues 320–342 (SKLVSRSTLRRQGKESSKEGNGI) form a disordered region. Positions 355 to 614 (FEFIRVLGKG…EHAILRHPFF (260 aa)) constitute a Protein kinase domain. Residues 361–369 (LGKGSFGKV) and Lys384 each bind ATP. The active-site Proton acceptor is Asp479. Thr513 carries the phosphothreonine; by PDPK1 modification. The AGC-kinase C-terminal domain occupies 615–683 (KEIDWAQLNH…FSYVSPELQP (69 aa)). Position 656 is a phosphothreonine (Thr656). Position 675 is a phosphoserine (Ser675).

This sequence belongs to the protein kinase superfamily. AGC Ser/Thr protein kinase family. PKC subfamily. Interacts with FYN. Interacts with RALA. Interacts with DGKQ. Interacts with PRKCH upstream open reading frame 2; the interaction leads to inhibition of kinase activity. As to expression, most abundant in lung, less in heart and skin.

It is found in the cytoplasm. It catalyses the reaction L-seryl-[protein] + ATP = O-phospho-L-seryl-[protein] + ADP + H(+). The enzyme catalyses L-threonyl-[protein] + ATP = O-phospho-L-threonyl-[protein] + ADP + H(+). With respect to regulation, novel PKCs (PRKCD, PRKCE, PRKCH and PRKCQ) are calcium-insensitive, but activated by diacylglycerol (DAG) and phosphatidylserine. Three specific sites; Thr-513 (activation loop of the kinase domain), Thr-656 (turn motif) and Ser-675 (hydrophobic region), need to be phosphorylated for its full activation. Inhibited by PRKCH upstream open reading frame 2. Functionally, calcium-independent, phospholipid- and diacylglycerol (DAG)-dependent serine/threonine-protein kinase that is involved in the regulation of cell differentiation in keratinocytes and pre-B cell receptor, mediates regulation of epithelial tight junction integrity and foam cell formation, and is required for glioblastoma proliferation and apoptosis prevention in MCF-7 cells. In keratinocytes, binds and activates the tyrosine kinase FYN, which in turn blocks epidermal growth factor receptor (EGFR) signaling and leads to keratinocyte growth arrest and differentiation. Associates with the cyclin CCNE1-CDK2-CDKN1B complex and inhibits CDK2 kinase activity, leading to RB1 dephosphorylation and thereby G1 arrest in keratinocytes. In association with RALA activates actin depolymerization, which is necessary for keratinocyte differentiation. In the pre-B cell receptor signaling, functions downstream of BLNK by up-regulating IRF4, which in turn activates L chain gene rearrangement. Regulates epithelial tight junctions (TJs) by phosphorylating occludin (OCLN) on threonine residues, which is necessary for the assembly and maintenance of TJs. In association with PLD2 and via TLR4 signaling, is involved in lipopolysaccharide (LPS)-induced RGS2 down-regulation and foam cell formation. Upon PMA stimulation, mediates glioblastoma cell proliferation by activating the mTOR pathway, the PI3K/AKT pathway and the ERK1-dependent phosphorylation of ELK1. Involved in the protection of glioblastoma cells from irradiation-induced apoptosis by preventing caspase-9 activation. In camptothecin-treated MCF-7 cells, regulates NF-kappa-B upstream signaling by activating IKBKB, and confers protection against DNA damage-induced apoptosis. Promotes oncogenic functions of ATF2 in the nucleus while blocking its apoptotic function at mitochondria. Phosphorylates ATF2 which promotes its nuclear retention and transcriptional activity and negatively regulates its mitochondrial localization. The protein is Protein kinase C eta type (PRKCH) of Homo sapiens (Human).